Consider the following 320-residue polypeptide: Nod factor export ATP-binding protein I (320 aa).

In terms of domain architecture, ABC transporter spans 15–245 (VSATGVWKKR…LGALKILEID (231 aa)). 47–54 (GTNGAGKS) is an ATP binding site.

It belongs to the ABC transporter superfamily. Lipooligosaccharide exporter (TC 3.A.1.102) family. As to quaternary structure, the complex is composed of two ATP-binding proteins (NodI) and two transmembrane proteins (NodJ).

The protein resides in the cell inner membrane. Functionally, part of the ABC transporter complex NodIJ involved in the export of the nodulation factors (Nod factors), the bacterial signal molecules that induce symbiosis and subsequent nodulation induction. Nod factors are LCO (lipo-chitin oligosaccharide), a modified beta-1,4-linked N-acetylglucosamine oligosaccharide. This subunit is responsible for energy coupling to the transport system. In Azorhizobium caulinodans (strain ATCC 43989 / DSM 5975 / JCM 20966 / LMG 6465 / NBRC 14845 / NCIMB 13405 / ORS 571), this protein is Nod factor export ATP-binding protein I.